The following is a 396-amino-acid chain: Tryptophan synthase beta chain (396 aa).

At Lys88 the chain carries N6-(pyridoxal phosphate)lysine.

It belongs to the TrpB family. Tetramer of two alpha and two beta chains. Requires pyridoxal 5'-phosphate as cofactor.

It catalyses the reaction (1S,2R)-1-C-(indol-3-yl)glycerol 3-phosphate + L-serine = D-glyceraldehyde 3-phosphate + L-tryptophan + H2O. Its pathway is amino-acid biosynthesis; L-tryptophan biosynthesis; L-tryptophan from chorismate: step 5/5. In terms of biological role, the beta subunit is responsible for the synthesis of L-tryptophan from indole and L-serine. In Shewanella baltica (strain OS195), this protein is Tryptophan synthase beta chain.